The sequence spans 671 residues: DNA ligase (671 aa).

Residues 36–40 (DAEYD), 85–86 (SL), and Glu116 contribute to the NAD(+) site. Catalysis depends on Lys118, which acts as the N6-AMP-lysine intermediate. NAD(+) is bound by residues Arg139, Glu176, Lys292, and Lys316. The Zn(2+) site is built by Cys410, Cys413, Cys428, and Cys434. Residues 591 to 671 (QKGGRFQGMT…QFLAMFSEKE (81 aa)) enclose the BRCT domain.

This sequence belongs to the NAD-dependent DNA ligase family. LigA subfamily. Mg(2+) serves as cofactor. Mn(2+) is required as a cofactor.

The catalysed reaction is NAD(+) + (deoxyribonucleotide)n-3'-hydroxyl + 5'-phospho-(deoxyribonucleotide)m = (deoxyribonucleotide)n+m + AMP + beta-nicotinamide D-nucleotide.. DNA ligase that catalyzes the formation of phosphodiester linkages between 5'-phosphoryl and 3'-hydroxyl groups in double-stranded DNA using NAD as a coenzyme and as the energy source for the reaction. It is essential for DNA replication and repair of damaged DNA. The chain is DNA ligase from Acidithiobacillus ferrooxidans (strain ATCC 23270 / DSM 14882 / CIP 104768 / NCIMB 8455) (Ferrobacillus ferrooxidans (strain ATCC 23270)).